Consider the following 233-residue polypeptide: Pre-hexon-linking protein VIII (233 aa).

Thr64 is subject to Phosphothreonine; by host. Positions 112-163 are excised as a propeptide; sequence ARHSFRYKGRTEPYPSPAIKRVLIRGKGIQLNDEVTSPLGVRPDGVFQLGGS. At Ser180 the chain carries Phosphoserine; by host.

It belongs to the adenoviridae hexon-linking protein family. Interacts with the peripentonal hexons as well as the hexons in the facets. Part of a complex composed of the core-capsid bridging protein, the endosome lysis protein VI and the hexon-linking protein VIII; these interactions bridge the virus core to the capsid. In terms of processing, cleaved by the viral protease during virion maturation. May cause the middle segment to be shed from the capsid.

The protein resides in the virion. It is found in the host nucleus. Its function is as follows. Structural component of the virion that acts as a cement protein on the capsid interior and which glue the peripentonal hexons and group-of-nine hexons together. This chain is Pre-hexon-linking protein VIII, found in Homo sapiens (Human).